Here is a 262-residue protein sequence, read N- to C-terminus: tRNA pseudouridine synthase A (262 aa).

Catalysis depends on D52, which acts as the Nucleophile. Residue Y110 coordinates substrate.

The protein belongs to the tRNA pseudouridine synthase TruA family. As to quaternary structure, homodimer.

It carries out the reaction uridine(38/39/40) in tRNA = pseudouridine(38/39/40) in tRNA. Its function is as follows. Formation of pseudouridine at positions 38, 39 and 40 in the anticodon stem and loop of transfer RNAs. The polypeptide is tRNA pseudouridine synthase A (Hydrogenovibrio crunogenus (strain DSM 25203 / XCL-2) (Thiomicrospira crunogena)).